We begin with the raw amino-acid sequence, 722 residues long: Serine/threonine-protein kinase MARK2 (722 aa).

Residues 1 to 46 (MSSARTPLPTLNERDTEQPTLGHLDSKPSSKSNMLRGRNSATSADE) are disordered. Positions 27–45 (KPSSKSNMLRGRNSATSAD) are enriched in polar residues. A Phosphoserine modification is found at Ser40. A Protein kinase domain is found at 53–304 (YRLLKTIGKG…LEQIMKDRWM (252 aa)). The residue at position 58 (Thr58) is a Phosphothreonine; by autocatalysis. Residues 59–67 (IGKGNFAKV) and Lys82 contribute to the ATP site. Phosphoserine; by CaMK1 occurs at positions 91, 92, and 93. Catalysis depends on Asp175, which acts as the Proton acceptor. The residue at position 208 (Thr208) is a Phosphothreonine; by LKB1 and TAOK1. Ser212 is subject to Phosphoserine; by GSK3-beta. Residue Ser274 is modified to Phosphoserine; by autocatalysis. A Phosphothreonine; by autocatalysis modification is found at Thr275. Phosphothreonine; by CaMK1 is present on Thr294. The 40-residue stretch at 323 to 362 (YKDPRRTELMVSMGYTREEIQDSLVGQRYNEVMATYLLLG) folds into the UBA domain. A disordered region spans residues 373-576 (ITLKPRPSAD…SQGRRGASGS (204 aa)). Ser408 and Ser409 each carry phosphoserine. A compositionally biased stretch (polar residues) spans 417–431 (PTSNSYSKKTQSNNA). Residues 432–442 (ENKRPEEETGR) are compositionally biased toward basic and acidic residues. Residue Ser453 is modified to Phosphoserine. Phosphothreonine is present on Thr464. Over residues 464–483 (TPTPSTNSVLSTSTNRSRNS) the composition is skewed to polar residues. Ser483 and Ser490 each carry phosphoserine. Positions 492-505 (GQASIQNGKDSTAP) are enriched in polar residues. The span at 511 to 524 (ASPSAHNISSSSGA) shows a compositional bias: low complexity. A phosphoserine mark is found at Ser512, Ser514, and Ser535. Thr539 bears the Phosphothreonine; by PKC/PRKCZ mark. Phosphoserine occurs at positions 562 and 656. The KA1 domain maps to 673-722 (TPGHENFVQWEMEVCKLPRLSLNGVRFKRISGTSMAFKNIASKIANELKL).

It belongs to the protein kinase superfamily. CAMK Ser/Thr protein kinase family. SNF1 subfamily. Homodimer. Interacts (when phosphorylated at Thr-539) with YWHAZ. Interacts with MTCL1; the interaction is direct and increases MARK2 microtubule-binding ability. Interacts with PAK5; leading to inhibit the protein kinase activity. Interacts with MAPT/TAU. Interacts with YWHAB, YWHAG and YWHAQ. Requires Mg(2+) as cofactor. Post-translationally, autophosphorylated. Phosphorylated at Thr-208 by STK11/LKB1 in complex with STE20-related adapter-alpha (STRADA) pseudo kinase and CAB39. Phosphorylation at Thr-208 by TAOK1 activates the kinase activity, leading to phosphorylation and detachment of MAPT/TAU from microtubules. Phosphorylation at Ser-212 by GSK3-beta (GSK3B) inhibits the kinase activity. Phosphorylation by CaMK1 promotes activity and is required to promote neurite outgrowth. Phosphorylation at Thr-539 by PRKCZ/aPKC in polarized epithelial cells inhibits the kinase activity and promotes binding to 14-3-3 protein YWHAZ, leading to relocation from cell membrane to cytoplasm.

The protein localises to the cell membrane. It is found in the lateral cell membrane. Its subcellular location is the cytoplasm. It localises to the cytoskeleton. The protein resides in the cell projection. The protein localises to the dendrite. The enzyme catalyses L-seryl-[protein] + ATP = O-phospho-L-seryl-[protein] + ADP + H(+). The catalysed reaction is L-threonyl-[protein] + ATP = O-phospho-L-threonyl-[protein] + ADP + H(+). It catalyses the reaction L-seryl-[tau protein] + ATP = O-phospho-L-seryl-[tau protein] + ADP + H(+). It carries out the reaction L-threonyl-[tau protein] + ATP = O-phospho-L-threonyl-[tau protein] + ADP + H(+). Its activity is regulated as follows. Inhibited by hymenialdisine. Activated by phosphorylation on Thr-208 by STK11/LKB1 and TAOK1. Inhibited by phosphorylation at Ser-212 or Thr-539. Inhibited by PAK5; inhibition is independent of the kinase activity of PAK5. Functionally, serine/threonine-protein kinase. Involved in cell polarity and microtubule dynamics regulation. Phosphorylates CRTC2/TORC2, DCX, HDAC7, KIF13B, MAP2, MAP4 and RAB11FIP2. Phosphorylates the microtubule-associated protein MAPT/TAU. Plays a key role in cell polarity by phosphorylating the microtubule-associated proteins MAP2, MAP4 and MAPT/TAU at KXGS motifs, causing detachment from microtubules, and their disassembly. Regulates epithelial cell polarity by phosphorylating RAB11FIP2. Involved in the regulation of neuronal migration through its dual activities in regulating cellular polarity and microtubule dynamics, possibly by phosphorylating and regulating DCX. Regulates axogenesis by phosphorylating KIF13B, promoting interaction between KIF13B and 14-3-3 and inhibiting microtubule-dependent accumulation of KIF13B. Also required for neurite outgrowth and establishment of neuronal polarity. Regulates localization and activity of some histone deacetylases by mediating phosphorylation of HDAC7, promoting subsequent interaction between HDAC7 and 14-3-3 and export from the nucleus. Also acts as a positive regulator of the Wnt signaling pathway, probably by mediating phosphorylation of dishevelled proteins (DVL1, DVL2 and/or DVL3). Modulates the developmental decision to build a columnar versus a hepatic epithelial cell apparently by promoting a switch from a direct to a transcytotic mode of apical protein delivery. Essential for the asymmetric development of membrane domains of polarized epithelial cells. This chain is Serine/threonine-protein kinase MARK2, found in Rattus norvegicus (Rat).